The following is a 270-amino-acid chain: 3-methyl-2-oxobutanoate hydroxymethyltransferase (270 aa).

Mg(2+)-binding residues include D50 and D89. 3-methyl-2-oxobutanoate contacts are provided by residues 50-51 (DS), D89, and K118. E120 contacts Mg(2+). Residue E187 is the Proton acceptor of the active site.

The protein belongs to the PanB family. In terms of assembly, homodecamer; pentamer of dimers. Requires Mg(2+) as cofactor.

The protein resides in the cytoplasm. It carries out the reaction 3-methyl-2-oxobutanoate + (6R)-5,10-methylene-5,6,7,8-tetrahydrofolate + H2O = 2-dehydropantoate + (6S)-5,6,7,8-tetrahydrofolate. Its pathway is cofactor biosynthesis; (R)-pantothenate biosynthesis; (R)-pantoate from 3-methyl-2-oxobutanoate: step 1/2. Functionally, catalyzes the reversible reaction in which hydroxymethyl group from 5,10-methylenetetrahydrofolate is transferred onto alpha-ketoisovalerate to form ketopantoate. The protein is 3-methyl-2-oxobutanoate hydroxymethyltransferase of Helicobacter pylori (strain HPAG1).